A 379-amino-acid chain; its full sequence is uncharacterized protein (379 aa).

This is an uncharacterized protein from Acanthamoeba polyphaga (Amoeba).